The sequence spans 2058 residues: E3 ubiquitin-protein ligase ubr-1 (2058 aa).

A UBR-type zinc finger spans residues 93-164 (QICGHVFKNG…EGYACANHEK (72 aa)). The disordered stretch occupies residues 1107 to 1175 (VPEAAPAPEN…TPSEKSETVV (69 aa)). Residues 1108-1119 (PEAAPAPENKPA) are compositionally biased toward low complexity. 2 stretches are compositionally biased toward basic and acidic residues: residues 1123 to 1138 (EEIKAKRAARAAEMRQ) and 1153 to 1175 (KKIEDEEKKDESQTPSEKSETVV). The RING-type; atypical zinc-finger motif lies at 1217–1335 (LTCILCQEDE…GEYQCPLCKR (119 aa)). Disordered regions lie at residues 1381 to 1416 (LSSESVSKKGHSRKRSHSERSLLDLEKLSKDPDTAN) and 1475 to 1499 (PAATPETIPAIGSSSRIPESQESGK). A compositionally biased stretch (basic residues) spans 1388-1397 (KKGHSRKRSH). Basic and acidic residues predominate over residues 1398–1413 (SERSLLDLEKLSKDPD). The span at 1486 to 1495 (GSSSRIPESQ) shows a compositional bias: polar residues. A helical transmembrane segment spans residues 1695 to 1715 (ILQIDILSLAISLMMTIGWTW).

Belongs to the E3 ubiquitin-protein ligase UBR1-like family. Interacts with ubc-1. Component of a complex containing at least ced-3, ubr-1 and possibly ate-1. Within complex interacts with ced-3 (via the p17 subunit); this interaction is required for the ced-3-mediated cleavage and subsequent degradation of the heterochronic protein lin-28. Expressed in pharyngeal muscles, body wall muscles and a subset of neurons throughout postembryonic development. Prominently expressed in premotor interneurons, but not expressed in ventral cord motor neurons. Weakly expressed in hypodermal seam cells.

It is found in the membrane. It catalyses the reaction S-ubiquitinyl-[E2 ubiquitin-conjugating enzyme]-L-cysteine + [acceptor protein]-L-lysine = [E2 ubiquitin-conjugating enzyme]-L-cysteine + N(6)-ubiquitinyl-[acceptor protein]-L-lysine.. It participates in protein modification; protein ubiquitination. Its function is as follows. E3 ubiquitin-protein ligase which is a component of the N-end rule pathway. Recognizes and binds to proteins bearing specific N-terminal residues that are destabilizing according to the N-end rule, leading to their ubiquitination and subsequent degradation. In complex with ced-3, required for the ced-3-mediated cleavage and subsequent degradation of the heterochronic protein lin-28 to regulate seam cell fate patterning during larval development. Negatively regulates glutamate metabolism through the aspartate aminotransferase got-1.2. Modulation of glutamate levels most likely controls locomotory behavior, in particular backwards locomotion or 'reversals'. This Caenorhabditis elegans protein is E3 ubiquitin-protein ligase ubr-1.